A 1363-amino-acid chain; its full sequence is Spike glycoprotein (1363 aa).

The N-terminal stretch at M1–F13 is a signal peptide. At A14–P1307 the chain is on the extracellular side. The BetaCoV S1-NTD domain maps to V15–T298. Cystine bridges form between C21–C165, C160–C193, C172–C252, C286–C296, and C331–C356. 2 N-linked (GlcNAc...) asparagine; by host glycosylation sites follow: N59 and N133. N-linked (GlcNAc...) asparagine; by host glycosylation occurs at N198. In terms of domain architecture, BetaCoV S1-CTD spans P329–T617. The N-linked (GlcNAc...) asparagine; by host glycan is linked to N359. 2 disulfides stabilise this stretch: C374-C427 and C386-C615. N-linked (GlcNAc...) asparagine; by host glycans are attached at residues N437, N649, N676, N696, N714, N739, and N788. 2 fusion peptide regions span residues S914–Y935 and E933–Y953. Residue N937 is glycosylated (N-linked (GlcNAc...) asparagine; by host). An intrachain disulfide couples C938 to C949. A heptad repeat 1 region spans residues Q1014 to F1064. Positions Q1043–I1087 form a coiled coil. Residues N1194, N1224, N1234, N1253, N1267, and N1288 are each glycosylated (N-linked (GlcNAc...) asparagine; by host). Positions A1258 to D1296 are heptad repeat 2. The stretch at T1269 to I1297 forms a coiled coil. The helical transmembrane segment at W1308–I1328 threads the bilayer. At C1329–D1363 the chain is on the cytoplasmic side. Residues T1359–D1363 carry the KxHxx motif.

It belongs to the betacoronaviruses spike protein family. In terms of assembly, homotrimer; each monomer consists of a S1 and a S2 subunit. The resulting peplomers protrude from the virus surface as spikes. Post-translationally, specific enzymatic cleavages in vivo yield mature proteins. The precursor is processed into S1 and S2 by host cell furin or another cellular protease to yield the mature S1 and S2 proteins. Additionally, a second cleavage leads to the release of a fusion peptide after viral attachment to host cell receptor. In terms of processing, the cytoplasmic Cys-rich domain is palmitoylated. Spike glycoprotein is digested within host endosomes.

The protein resides in the virion membrane. It is found in the host endoplasmic reticulum-Golgi intermediate compartment membrane. The protein localises to the host cell membrane. Its function is as follows. Attaches the virion to the cell membrane by interacting with host receptor, initiating the infection. Mediates fusion of the virion and cellular membranes by acting as a class I viral fusion protein. Under the current model, the protein has at least three conformational states: pre-fusion native state, pre-hairpin intermediate state, and post-fusion hairpin state. During viral and target cell membrane fusion, the coiled coil regions (heptad repeats) assume a trimer-of-hairpins structure, positioning the fusion peptide in close proximity to the C-terminal region of the ectodomain. The formation of this structure appears to drive apposition and subsequent fusion of viral and target cell membranes. Functionally, acts as a viral fusion peptide which is unmasked following S2 cleavage occurring upon virus endocytosis. This is Spike glycoprotein from Bos taurus (Bovine).